The sequence spans 340 residues: Ribosomal RNA large subunit methyltransferase F (340 aa).

Positions 1–36 (MNAPRTPKPARKKPDSATPAKPVEPRKEASLHPRNR) are disordered.

It belongs to the methyltransferase superfamily. METTL16/RlmF family.

It localises to the cytoplasm. The catalysed reaction is adenosine(1618) in 23S rRNA + S-adenosyl-L-methionine = N(6)-methyladenosine(1618) in 23S rRNA + S-adenosyl-L-homocysteine + H(+). In terms of biological role, specifically methylates the adenine in position 1618 of 23S rRNA. This is Ribosomal RNA large subunit methyltransferase F from Pseudomonas fluorescens (strain Pf0-1).